Consider the following 353-residue polypeptide: Holliday junction branch migration complex subunit RuvB (353 aa).

The disordered stretch occupies residues 1-25 (MDPGPAGDEVSLAPQQETAEQDVET). The tract at residues 1–188 (MDPGPAGDEV…FGFTAHMEFY (188 aa)) is large ATPase domain (RuvB-L). Residues Leu-27, Arg-28, Gly-69, Lys-72, Thr-73, Ser-74, 135–137 (EDY), Arg-178, Tyr-188, and Arg-225 each bind ATP. Thr-73 contacts Mg(2+). The interval 189-259 (EPAELELVVR…VARAALEVYD (71 aa)) is small ATPAse domain (RuvB-S). Residues 262–353 (EHGLDRLDRA…ATRSLFADEV (92 aa)) form a head domain (RuvB-H) region. Arg-317 and Arg-322 together coordinate DNA.

It belongs to the RuvB family. As to quaternary structure, homohexamer. Forms an RuvA(8)-RuvB(12)-Holliday junction (HJ) complex. HJ DNA is sandwiched between 2 RuvA tetramers; dsDNA enters through RuvA and exits via RuvB. An RuvB hexamer assembles on each DNA strand where it exits the tetramer. Each RuvB hexamer is contacted by two RuvA subunits (via domain III) on 2 adjacent RuvB subunits; this complex drives branch migration. In the full resolvosome a probable DNA-RuvA(4)-RuvB(12)-RuvC(2) complex forms which resolves the HJ.

It localises to the cytoplasm. It carries out the reaction ATP + H2O = ADP + phosphate + H(+). The RuvA-RuvB-RuvC complex processes Holliday junction (HJ) DNA during genetic recombination and DNA repair, while the RuvA-RuvB complex plays an important role in the rescue of blocked DNA replication forks via replication fork reversal (RFR). RuvA specifically binds to HJ cruciform DNA, conferring on it an open structure. The RuvB hexamer acts as an ATP-dependent pump, pulling dsDNA into and through the RuvAB complex. RuvB forms 2 homohexamers on either side of HJ DNA bound by 1 or 2 RuvA tetramers; 4 subunits per hexamer contact DNA at a time. Coordinated motions by a converter formed by DNA-disengaged RuvB subunits stimulates ATP hydrolysis and nucleotide exchange. Immobilization of the converter enables RuvB to convert the ATP-contained energy into a lever motion, pulling 2 nucleotides of DNA out of the RuvA tetramer per ATP hydrolyzed, thus driving DNA branch migration. The RuvB motors rotate together with the DNA substrate, which together with the progressing nucleotide cycle form the mechanistic basis for DNA recombination by continuous HJ branch migration. Branch migration allows RuvC to scan DNA until it finds its consensus sequence, where it cleaves and resolves cruciform DNA. The protein is Holliday junction branch migration complex subunit RuvB of Saccharopolyspora erythraea (strain ATCC 11635 / DSM 40517 / JCM 4748 / NBRC 13426 / NCIMB 8594 / NRRL 2338).